The chain runs to 176 residues: Shikimate kinase (176 aa).

ATP is bound at residue 10 to 15; sequence TSGKSS. Mg(2+) is bound at residue S14. Positions 32, 81, and 138 each coordinate substrate.

This sequence belongs to the shikimate kinase family. In terms of assembly, monomer. It depends on Mg(2+) as a cofactor.

The protein localises to the cytoplasm. The catalysed reaction is shikimate + ATP = 3-phosphoshikimate + ADP + H(+). Its pathway is metabolic intermediate biosynthesis; chorismate biosynthesis; chorismate from D-erythrose 4-phosphate and phosphoenolpyruvate: step 5/7. Its function is as follows. Catalyzes the specific phosphorylation of the 3-hydroxyl group of shikimic acid using ATP as a cosubstrate. The sequence is that of Shikimate kinase from Chlamydia pneumoniae (Chlamydophila pneumoniae).